A 233-amino-acid polypeptide reads, in one-letter code: Putative glutathione peroxidase 7, chloroplastic (233 aa).

The transit peptide at 1–69 (MAFSYASFST…KSKNFSVYAR (69 aa)) directs the protein to the chloroplast. Cys-108 is an active-site residue.

Belongs to the glutathione peroxidase family.

It localises to the plastid. The protein resides in the chloroplast. The catalysed reaction is 2 glutathione + H2O2 = glutathione disulfide + 2 H2O. May constitute a glutathione peroxidase-like protective system against oxidative stresses. This is Putative glutathione peroxidase 7, chloroplastic (GPX7) from Arabidopsis thaliana (Mouse-ear cress).